Reading from the N-terminus, the 376-residue chain is Carboxylic ester hydrolase LipN (376 aa).

Active-site residues include Ser216, Asp316, and His346.

Belongs to the 'GDXG' lipolytic enzyme family.

The protein localises to the cytoplasm. It carries out the reaction a carboxylic ester + H2O = an alcohol + a carboxylate + H(+). It catalyses the reaction an acetyl ester + H2O = an aliphatic alcohol + acetate + H(+). The catalysed reaction is a butanoate ester + H2O = an aliphatic alcohol + butanoate + H(+). The enzyme catalyses an octanoate ester + H2O = an aliphatic alcohol + octanoate + H(+). It carries out the reaction decanoate ester + H2O = decanoate + an aliphatic alcohol + H(+). It catalyses the reaction a dodecanoate ester + H2O = an aliphatic alcohol + dodecanoate + H(+). The catalysed reaction is 1,2,3-tributanoylglycerol + H2O = dibutanoylglycerol + butanoate + H(+). The enzyme catalyses 4-acetoxyphenol + H2O = hydroquinone + acetate + H(+). With respect to regulation, completely inhibited by tetrahydrolipstatin (THL), RHC-80267 and N-bromosuccinimide. Non specific carboxylic ester hydrolase. Hydrolyzes various pNP-esters, with a preference for short carbon chain substrates. Can also hydrolyze tributyrin to di- and monobutyrin and 4-hydroxyphenylacetate to hydroquinone. The chain is Carboxylic ester hydrolase LipN from Mycobacterium tuberculosis (strain ATCC 25618 / H37Rv).